Here is a 204-residue protein sequence, read N- to C-terminus: Imidazoleglycerol-phosphate dehydratase (204 aa).

Belongs to the imidazoleglycerol-phosphate dehydratase family.

Its subcellular location is the cytoplasm. The catalysed reaction is D-erythro-1-(imidazol-4-yl)glycerol 3-phosphate = 3-(imidazol-4-yl)-2-oxopropyl phosphate + H2O. Its pathway is amino-acid biosynthesis; L-histidine biosynthesis; L-histidine from 5-phospho-alpha-D-ribose 1-diphosphate: step 6/9. This Albidiferax ferrireducens (strain ATCC BAA-621 / DSM 15236 / T118) (Rhodoferax ferrireducens) protein is Imidazoleglycerol-phosphate dehydratase.